Consider the following 349-residue polypeptide: S-adenosylmethionine:tRNA ribosyltransferase-isomerase (349 aa).

It belongs to the QueA family. In terms of assembly, monomer.

The protein localises to the cytoplasm. The catalysed reaction is 7-aminomethyl-7-carbaguanosine(34) in tRNA + S-adenosyl-L-methionine = epoxyqueuosine(34) in tRNA + adenine + L-methionine + 2 H(+). The protein operates within tRNA modification; tRNA-queuosine biosynthesis. Its function is as follows. Transfers and isomerizes the ribose moiety from AdoMet to the 7-aminomethyl group of 7-deazaguanine (preQ1-tRNA) to give epoxyqueuosine (oQ-tRNA). The chain is S-adenosylmethionine:tRNA ribosyltransferase-isomerase from Pseudomonas putida (strain W619).